Here is a 156-residue protein sequence, read N- to C-terminus: Non-structural protein 2 (156 aa).

The protein belongs to the pneumovirus non-structural protein 2 family.

It is found in the host cytoplasm. Its function is as follows. Plays a major role in antagonizing the type I IFN-mediated antiviral response. May also inhibit viral transcription and RNA replication. This Mus musculus (Mouse) protein is Non-structural protein 2 (1B).